The sequence spans 458 residues: VSLSSPTLYPLVSCEGALTDGNLVAMGCLARDFLPSSVTFSWSFKNNSEISSRTVRTFPVVKRGDKYMATSQVLVPSKDVLQGTEEYLVCKVQHSNSNRDLRVSFPVDSELPPNVSVFIPPRDSFSGSGTRKSRLICQATGFSPKQISVSWLRDGQKVESGVLTKPVEAETKGAGPATFSISSMLTITESDWLSQSLYTCRVDHRGIFFDKNVSMSSECSTTPSPGIQVFPIAPSFADTFLSKSARLICLVTDLTTYGSLNISWASHNGKALDTHMNITESHPNATFSAMGEASVCAEDWESGEQFTCTVTHADLPFPLKHTISKSREVAKHPPAVYVLPPAREQLVLRESATVTCLVKGFSPADVFVQWQQRGQPLSSDKYVTSAPAPEPQAPGLYFTHSTLTVTEEDWNSGETFTCVVGHEALPHMVTERTVDKSTGKPTLYNVSLIMSDTASTCY.

The tract at residues 1–106 is CH1; sequence VSLSSPTLYP…SNRDLRVSFP (106 aa). A disulfide bridge links cysteine 28 with cysteine 90. Residues asparagine 46 and asparagine 114 are each glycosylated (N-linked (GlcNAc...) asparagine). The segment at 107–222 is CH2; sequence VDSELPPNVS…VSMSSECSTT (116 aa). An intrachain disulfide couples cysteine 137 to cysteine 200. N-linked (GlcNAc...) asparagine glycans are attached at residues asparagine 212, asparagine 261, asparagine 277, and asparagine 284. The tract at residues 223–327 is CH3; the sequence is PSPGIQVFPI…PLKHTISKSR (105 aa). 2 disulfide bridges follow: cysteine 249-cysteine 308 and cysteine 356-cysteine 418. The CH4 stretch occupies residues 328-458; that stretch reads EVAKHPPAVY…IMSDTASTCY (131 aa). N-linked (GlcNAc...) asparagine glycosylation occurs at asparagine 445.

The protein localises to the secreted. In Oryctolagus cuniculus (Rabbit), this protein is Ig mu chain C region secreted form.